We begin with the raw amino-acid sequence, 464 residues long: Kynureninase (464 aa).

Met-1 is modified (N-acetylmethionine). Residues Leu-137, Thr-138, 165–168 (FPSD), Ser-221, Asp-250, His-253, and Tyr-275 contribute to the pyridoxal 5'-phosphate site. Position 276 is an N6-(pyridoxal phosphate)lysine (Lys-276). Pyridoxal 5'-phosphate contacts are provided by Trp-305 and Asn-333.

Belongs to the kynureninase family. Homodimer. The cofactor is pyridoxal 5'-phosphate.

It is found in the cytoplasm. Its subcellular location is the cytosol. The enzyme catalyses L-kynurenine + H2O = anthranilate + L-alanine + H(+). It carries out the reaction 3-hydroxy-L-kynurenine + H2O = 3-hydroxyanthranilate + L-alanine + H(+). It participates in amino-acid degradation; L-kynurenine degradation; L-alanine and anthranilate from L-kynurenine: step 1/1. The protein operates within cofactor biosynthesis; NAD(+) biosynthesis; quinolinate from L-kynurenine: step 2/3. In terms of biological role, catalyzes the cleavage of L-kynurenine (L-Kyn) and L-3-hydroxykynurenine (L-3OHKyn) into anthranilic acid (AA) and 3-hydroxyanthranilic acid (3-OHAA), respectively. Has a preference for the L-3-hydroxy form. Also has cysteine-conjugate-beta-lyase activity. The sequence is that of Kynureninase (Kynu) from Mus musculus (Mouse).